The chain runs to 178 residues: Small ribosomal subunit protein uS4 (178 aa).

Residues 104 to 166 (RRLQTIVYRK…PNSPMASENH (63 aa)) form the S4 RNA-binding domain. A disordered region spans residues 158 to 178 (NSPMASENHPERTAAVSEENQ).

This sequence belongs to the universal ribosomal protein uS4 family. In terms of assembly, part of the 30S ribosomal subunit. Contacts protein S5. The interaction surface between S4 and S5 is involved in control of translational fidelity.

Functionally, one of the primary rRNA binding proteins, it binds directly to 16S rRNA where it nucleates assembly of the body of the 30S subunit. Its function is as follows. With S5 and S12 plays an important role in translational accuracy. This is Small ribosomal subunit protein uS4 from Methanococcus maripaludis (strain C5 / ATCC BAA-1333).